Reading from the N-terminus, the 478-residue chain is Protein nucleotidyltransferase YdiU (478 aa).

Gly84, Gly86, Arg87, Lys107, Asp119, Gly120, Arg170, and Arg177 together coordinate ATP. Asp246 acts as the Proton acceptor in catalysis. Asn247 and Asp256 together coordinate Mg(2+). Residue Asp256 participates in ATP binding.

This sequence belongs to the SELO family. Mg(2+) serves as cofactor. The cofactor is Mn(2+).

It catalyses the reaction L-seryl-[protein] + ATP = 3-O-(5'-adenylyl)-L-seryl-[protein] + diphosphate. The enzyme catalyses L-threonyl-[protein] + ATP = 3-O-(5'-adenylyl)-L-threonyl-[protein] + diphosphate. It carries out the reaction L-tyrosyl-[protein] + ATP = O-(5'-adenylyl)-L-tyrosyl-[protein] + diphosphate. The catalysed reaction is L-histidyl-[protein] + UTP = N(tele)-(5'-uridylyl)-L-histidyl-[protein] + diphosphate. It catalyses the reaction L-seryl-[protein] + UTP = O-(5'-uridylyl)-L-seryl-[protein] + diphosphate. The enzyme catalyses L-tyrosyl-[protein] + UTP = O-(5'-uridylyl)-L-tyrosyl-[protein] + diphosphate. Functionally, nucleotidyltransferase involved in the post-translational modification of proteins. It can catalyze the addition of adenosine monophosphate (AMP) or uridine monophosphate (UMP) to a protein, resulting in modifications known as AMPylation and UMPylation. The polypeptide is Protein nucleotidyltransferase YdiU (Escherichia coli O7:K1 (strain IAI39 / ExPEC)).